We begin with the raw amino-acid sequence, 205 residues long: dITP/XTP pyrophosphatase (205 aa).

10–15 provides a ligand contact to substrate; that stretch reads TKNEGK. Mg(2+)-binding residues include E44 and D73. D73 (proton acceptor) is an active-site residue. Residues S74, 156–159, K179, and 184–185 contribute to the substrate site; these read FGYD and HR.

The protein belongs to the HAM1 NTPase family. As to quaternary structure, homodimer. The cofactor is Mg(2+).

The enzyme catalyses XTP + H2O = XMP + diphosphate + H(+). It catalyses the reaction dITP + H2O = dIMP + diphosphate + H(+). It carries out the reaction ITP + H2O = IMP + diphosphate + H(+). In terms of biological role, pyrophosphatase that catalyzes the hydrolysis of nucleoside triphosphates to their monophosphate derivatives, with a high preference for the non-canonical purine nucleotides XTP (xanthosine triphosphate), dITP (deoxyinosine triphosphate) and ITP. Seems to function as a house-cleaning enzyme that removes non-canonical purine nucleotides from the nucleotide pool, thus preventing their incorporation into DNA/RNA and avoiding chromosomal lesions. This Dictyoglomus thermophilum (strain ATCC 35947 / DSM 3960 / H-6-12) protein is dITP/XTP pyrophosphatase.